We begin with the raw amino-acid sequence, 172 residues long: NADH-quinone oxidoreductase subunit B (172 aa).

Residues Cys-46, Cys-47, Cys-111, and Cys-141 each coordinate [4Fe-4S] cluster.

Belongs to the complex I 20 kDa subunit family. NDH-1 is composed of 14 different subunits. Subunits NuoB, C, D, E, F, and G constitute the peripheral sector of the complex. [4Fe-4S] cluster serves as cofactor.

Its subcellular location is the cell membrane. The enzyme catalyses a quinone + NADH + 5 H(+)(in) = a quinol + NAD(+) + 4 H(+)(out). Functionally, NDH-1 shuttles electrons from NADH, via FMN and iron-sulfur (Fe-S) centers, to quinones in the respiratory chain. The immediate electron acceptor for the enzyme in this species is believed to be a menaquinone. Couples the redox reaction to proton translocation (for every two electrons transferred, four hydrogen ions are translocated across the cytoplasmic membrane), and thus conserves the redox energy in a proton gradient. The sequence is that of NADH-quinone oxidoreductase subunit B from Bacillus mycoides (strain KBAB4) (Bacillus weihenstephanensis).